The primary structure comprises 334 residues: Putative heme-binding peroxidase (334 aa).

The Proton acceptor role is filled by His-40. His-169 contacts heme b. Trp-185 (tryptophan radical intermediate) is an active-site residue.

It belongs to the peroxidase family. Cytochrome c peroxidase subfamily. The cofactor is heme b.

Functionally, destroys radicals which are normally produced within the cells and which are toxic to biological systems. The protein is Putative heme-binding peroxidase of Cryptococcus neoformans var. neoformans serotype D (strain JEC21 / ATCC MYA-565) (Filobasidiella neoformans).